A 184-amino-acid polypeptide reads, in one-letter code: TATA-box-binding protein (184 aa).

2 repeat units span residues 9-85 and 100-178.

Belongs to the TBP family.

In terms of biological role, general factor that plays a role in the activation of archaeal genes transcribed by RNA polymerase. Binds specifically to the TATA box promoter element which lies close to the position of transcription initiation. The sequence is that of TATA-box-binding protein from Picrophilus torridus (strain ATCC 700027 / DSM 9790 / JCM 10055 / NBRC 100828 / KAW 2/3).